The sequence spans 307 residues: Ninja-family protein 5 (307 aa).

Disordered stretches follow at residues 1 to 159 (MASR…EHTV) and 173 to 208 (TAGS…EPQP). Over residues 8–30 (GGFGRDGGQAPVGGAGAAPGPGG) the composition is skewed to gly residues. Composition is skewed to polar residues over residues 63 to 83 (QRSS…GTSC) and 173 to 183 (TAGSPTPSRPQ).

It belongs to the Ninja family.

The protein localises to the nucleus. The sequence is that of Ninja-family protein 5 from Zea mays (Maize).